The primary structure comprises 928 residues: Echinoderm microtubule-associated protein-like 4 (928 aa).

A microtubule-binding region spans residues 1–189 (MDGFAGSLDD…IPSDVENYDD (189 aa)). A coiled-coil region spans residues 14 to 63 (AASTSDVQDRLSALELRVQQQEDEITVLKAALADVLRRLAISEDQVATVR). Residues 107-131 (SAAKSVKRSSTIEKSHNSWDASEES) are disordered. A compositionally biased stretch (basic and acidic residues) spans 116–131 (STIEKSHNSWDASEES). WD repeat units follow at residues 199–237 (LKLEWVFGYRGRDCRANVYLLPTGEIVYFIASVVVLFNY), 241–288 (TQRH…VWDS), 296–336 (VIGL…VWDW), 343–378 (AEIKTTNEVVLTVEFHPTDACTIVTCGKSHIFFWTW), 385–424 (RKQGIFGKYEKPKFVQCLAFLANGDVLAGDSGGVMLIWSK), 442–480 (QISRQIKAHDGSVFTLCQMRNGMLLTGGGKDRKVIMWDH), 485–521 (EREIEVPDQYGTIRAVAEGKGDQFLIGTSRNFILRGT), 524–563 (DGFQVEVQGHTDELWGLATHPFKDLLLTCAQDKQVCLWNS), 567–604 (SLEWTRVLDEPGHCADFHPTGTVVAIGTHSGRWFVLDA), 610–646 (VSIHTDGNEQLSVMRYSVDGALLAVGSHDNFIYLYNV), 653–692 (YSRYGKCTGHSSYITHLDWSPDNQYIMSNSGDYEILYWDI), 702–760 (RSDC…LFQY), and 767–806 (APSHKYSAHSSHVTNVSFTHKDSHLISTGGKDMSIMQWRL). Positions 821–928 (SSSAVNSPVV…ENQDDSSPLS (108 aa)) are disordered. Residues 836–845 (QPNTPTNLPQ) are compositionally biased toward polar residues. The span at 867–876 (DALEQPEELN) shows a compositional bias: acidic residues. A compositionally biased stretch (polar residues) spans 877 to 898 (EVQSEKCSSQPEGANGQEPSNE).

It belongs to the WD repeat EMAP family. Homotrimer; self-association is mediated by the N-terminal coiled coil.

It localises to the cytoplasm. It is found in the cytoskeleton. The protein resides in the spindle. The protein localises to the microtubule organizing center. Its subcellular location is the midbody. Essential for the formation and stability of microtubules (MTs). Required for the organization of the mitotic spindle and for the proper attachment of kinetochores to MTs. Promotes the recruitment of NUDC to the mitotic spindle for mitotic progression. The polypeptide is Echinoderm microtubule-associated protein-like 4 (eml4) (Xenopus tropicalis (Western clawed frog)).